Reading from the N-terminus, the 646-residue chain is uncharacterized protein (646 aa).

Transmembrane regions (helical) follow at residues Ala-20–Phe-40, Leu-54–Ile-74, Leu-115–Ile-135, Ala-154–Leu-174, Thr-203–Ile-223, Ile-232–Phe-252, Leu-285–Phe-305, Gly-523–Gly-543, Ile-582–Ala-602, and Phe-613–Val-633.

Belongs to the ABC-4 integral membrane protein family.

It localises to the cell membrane. This is an uncharacterized protein from Bacillus subtilis (strain 168).